Here is a 1196-residue protein sequence, read N- to C-terminus: DNA-directed RNA polymerase subunit beta (1196 aa).

Belongs to the RNA polymerase beta chain family. In terms of assembly, the RNAP catalytic core consists of 2 alpha, 1 beta, 1 beta' and 1 omega subunit. When a sigma factor is associated with the core the holoenzyme is formed, which can initiate transcription.

The catalysed reaction is RNA(n) + a ribonucleoside 5'-triphosphate = RNA(n+1) + diphosphate. In terms of biological role, DNA-dependent RNA polymerase catalyzes the transcription of DNA into RNA using the four ribonucleoside triphosphates as substrates. In Lactococcus lactis subsp. cremoris (strain MG1363), this protein is DNA-directed RNA polymerase subunit beta.